The following is a 285-amino-acid chain: DegV domain-containing protein CA_C3284 (285 aa).

One can recognise a DegV domain in the interval 3-280 (VKILTDSTSC…PGAIGIAYYT (278 aa)). Hexadecanoate-binding residues include S59 and S91.

Its function is as follows. May bind long-chain fatty acids, such as palmitate, and may play a role in lipid transport or fatty acid metabolism. This Clostridium acetobutylicum (strain ATCC 824 / DSM 792 / JCM 1419 / IAM 19013 / LMG 5710 / NBRC 13948 / NRRL B-527 / VKM B-1787 / 2291 / W) protein is DegV domain-containing protein CA_C3284.